A 649-amino-acid polypeptide reads, in one-letter code: Protein mitoshell (649 aa).

A compositionally biased stretch (basic and acidic residues) spans 167-176 (LRSEARKPRP). Disordered regions lie at residues 167-193 (LRSE…ESGA), 389-414 (HGPS…EPTS), and 485-512 (ALPS…VRSY). Residues 177–191 (ESVVPEESSISSLES) are compositionally biased toward low complexity. Composition is skewed to polar residues over residues 393-414 (AFST…EPTS) and 485-503 (ALPS…SPQS).

Required for male meiotic cytokinesis through its involvement in the regulation of mitochondrial aggregation and fusion, astral spindle assembly and contractile ring formation. The polypeptide is Protein mitoshell (Drosophila melanogaster (Fruit fly)).